Here is a 300-residue protein sequence, read N- to C-terminus: Mitochondrial carnitine/acylcarnitine carrier-like protein (300 aa).

3 Solcar repeats span residues 2–93 (ADAW…MEGL), 102–201 (LTIS…FKRF), and 211–298 (LGQG…TRSS). 6 consecutive transmembrane segments (helical) span residues 8-28 (LASG…FDTI), 64-84 (GLYK…AVLF), 108-128 (FVAG…TELI), 176-195 (GLFP…FAAY), 211-231 (LGQG…WGIV), and 273-292 (GFGP…FLAY).

It belongs to the mitochondrial carrier (TC 2.A.29) family. As to expression, high expression in cotyledons, leaves, flowers and developing siliques. Lower expression in roots and maturing siliques. Not detected in meristematic tissues.

Its subcellular location is the mitochondrion inner membrane. In terms of biological role, involved in photorespiratory metabolism. Acts probably as a carrier for a glycine decarboxylase (GDC) cofactor or, alternatively, may act as a mitochondrial glycine shuttle. Involved in the transition from the embryonic stage to the juvenile autotrophic stage. This Arabidopsis thaliana (Mouse-ear cress) protein is Mitochondrial carnitine/acylcarnitine carrier-like protein (BOU).